An 864-amino-acid polypeptide reads, in one-letter code: Protein 4.1 (864 aa).

2 stretches are compositionally biased toward polar residues: residues 1 to 16 (MTTE…NSQH) and 27 to 41 (NSGQ…SCQT). Disordered regions lie at residues 1-122 (MTTE…GTSL), 136-170 (EPEL…DFEI), and 182-202 (IEVK…ASQK). At S14 the chain carries Phosphoserine. At T60 the chain carries Phosphothreonine; by CDK1. Positions 61-75 (PTHEDLTKNKERTSE) are enriched in basic and acidic residues. Over residues 76–87 (SRGLSRLFSSFL) the composition is skewed to low complexity. Phosphoserine occurs at positions 84, 85, 95, 104, 121, 149, 151, 152, 188, and 191. Residues 101 to 117 (EVESDKEKGEGGQKEIE) show a composition bias toward basic and acidic residues. Residues 149–158 (SLSSAETQPA) are compositionally biased toward polar residues. A compositionally biased stretch (basic and acidic residues) spans 182–199 (IEVKEESPQSKAETELKA). One can recognise an FERM domain in the interval 210 to 491 (MHCKVSLLDD…EHHTFFRLTS (282 aa)). Phosphotyrosine is present on Y222. T378 carries the phosphothreonine modification. A hydrophilic region spans residues 494–614 (TIPKSKFLAL…QAEPEPTEAW (121 aa)). 2 disordered regions span residues 518–572 (RQAS…VAEG) and 586–611 (KAQK…PEPT). S521, S540, S542, and S555 each carry phosphoserine. Positions 587-600 (AQKETVKAEVKKED) are enriched in basic and acidic residues. Positions 601-610 (EPPEQAEPEP) are enriched in acidic residues. Residues 615–713 (KVEKTHIEVT…WDKRLSTHSP (99 aa)) are spectrin--actin-binding. Y660 is modified (phosphotyrosine; by EGFR). S664, S674, S684, and S709 each carry phosphoserine. At S712 the chain carries Phosphoserine; by CDK1. A C-terminal (CTD) region spans residues 714–864 (FRTLNINGQI…VHQETEIADE (151 aa)). 2 positions are modified to phosphothreonine: T736 and T859.

As to quaternary structure, binds with a high affinity to glycophorin and with lower affinity to band III protein. Associates with the nuclear mitotic apparatus. Interacts with calmodulin. Interacts with CPAP. Interacts with DLG1. Also found to associate with contractile apparatus and tight junctions. Interacts with NUMA1; this interaction is negatively regulated by CDK1 during metaphase and promotes anaphase-specific localization of NUMA1 in symmetrically dividing cells. Interacts with ATP2B1; regulates small intestinal calcium absorption through regulation of membrane expression of ATP2B1. In terms of processing, phosphorylated at multiple sites by different protein kinases and each phosphorylation event selectively modulates the protein's functions. Post-translationally, phosphorylation on Tyr-660 reduces the ability of 4.1 to promote the assembly of the spectrin/actin/4.1 ternary complex. O-glycosylated; contains N-acetylglucosamine side chains in the C-terminal domain.

It is found in the cytoplasm. The protein resides in the cytoskeleton. It localises to the cell cortex. The protein localises to the nucleus. Protein 4.1 is a major structural element of the erythrocyte membrane skeleton. It plays a key role in regulating membrane physical properties of mechanical stability and deformability by stabilizing spectrin-actin interaction. Recruits DLG1 to membranes. Required for dynein-dynactin complex and NUMA1 recruitment at the mitotic cell cortex during anaphase. The chain is Protein 4.1 from Homo sapiens (Human).